We begin with the raw amino-acid sequence, 813 residues long: Molybdenum cofactor sulfurase (813 aa).

Lys-228 is subject to N6-(pyridoxal phosphate)lysine. Residue Cys-391 is part of the active site. Positions 625–670 (PSLRHAKAHMQKHQGPKRSAAIEKSSAHSFHDPPTPPDSDSENRKR) are disordered. The span at 628 to 640 (RHAKAHMQKHQGP) shows a compositional bias: basic residues. The region spanning 648–812 (KSSAHSFHDP…IKVGDKVSIG (165 aa)) is the MOSC domain.

It belongs to the class-V pyridoxal-phosphate-dependent aminotransferase family. MOCOS subfamily. Requires pyridoxal 5'-phosphate as cofactor.

It catalyses the reaction Mo-molybdopterin + L-cysteine + AH2 = thio-Mo-molybdopterin + L-alanine + A + H2O. Its function is as follows. Sulfurates the molybdenum cofactor. Sulfation of molybdenum is essential for xanthine dehydrogenase (XDH) and aldehyde oxidase (ADO) enzymes in which molybdenum cofactor is liganded by 1 oxygen and 1 sulfur atom in active form. The sequence is that of Molybdenum cofactor sulfurase from Botryotinia fuckeliana (strain B05.10) (Noble rot fungus).